Consider the following 178-residue polypeptide: UPF0215 protein STK_03040 (178 aa).

This sequence belongs to the UPF0215 family.

The polypeptide is UPF0215 protein STK_03040 (Sulfurisphaera tokodaii (strain DSM 16993 / JCM 10545 / NBRC 100140 / 7) (Sulfolobus tokodaii)).